The primary structure comprises 208 residues: Ribonuclease HII (208 aa).

Residues 17–208 (LRVCGIDEAG…SFRLRQLGEK (192 aa)) enclose the RNase H type-2 domain. A divalent metal cation-binding residues include Asp23, Glu24, and Asp120.

This sequence belongs to the RNase HII family. Mn(2+) serves as cofactor. Mg(2+) is required as a cofactor.

The protein localises to the cytoplasm. The enzyme catalyses Endonucleolytic cleavage to 5'-phosphomonoester.. Its function is as follows. Endonuclease that specifically degrades the RNA of RNA-DNA hybrids. The sequence is that of Ribonuclease HII from Chlorobium luteolum (strain DSM 273 / BCRC 81028 / 2530) (Pelodictyon luteolum).